The sequence spans 36 residues: ATGSPAPDCVESFQSWRYTDVRNGCSDAVTVVVQYE.

Cysteine 9 and cysteine 25 are disulfide-bonded.

Its function is as follows. Inhibits mammalian alpha-amylases specifically but has no action on plant and microbial alpha-amylases. The polypeptide is Alpha-amylase inhibitor AI-3688 (Kitasatospora aureofaciens (Streptomyces aureofaciens)).